A 553-amino-acid chain; its full sequence is Cytochrome P450 monooxygenase alnD (553 aa).

Residues 351 to 371 (LVGAGFVTSSAFLSWLIYSLV) form a helical membrane-spanning segment. Heme is bound at residue C493. An N-linked (GlcNAc...) asparagine glycan is attached at N518.

It belongs to the cytochrome P450 family. Requires heme as cofactor.

It is found in the membrane. It participates in polyketide biosynthesis. In terms of biological role, cytochrome P450 monooxygenase; part of the gene cluster that mediates the biosynthesis of asperlin, a polyketide showing anti-inflammatory, antitumor and antibiotic activities. The first step of the asperlin biosynthesis is the production of the intermediate 2,4,6-octatrienoic acid by the highly redusing polyketide synthase alnA with cleavage of the PKS product by the esterase alnB. 2,4,6-octatrienoic acid is further converted to asperlin via several steps involving the remaining enzymes from the cluster. The polypeptide is Cytochrome P450 monooxygenase alnD (Emericella nidulans (strain FGSC A4 / ATCC 38163 / CBS 112.46 / NRRL 194 / M139) (Aspergillus nidulans)).